The primary structure comprises 336 residues: Cytochrome P450 monooxygenase lcsN (336 aa).

Cys-271 contacts heme.

This sequence belongs to the cytochrome P450 family. Requires heme as cofactor.

The protein operates within secondary metabolite biosynthesis. Cytochrome P450 monooxygenase; part of the gene cluster that mediates the biosynthesis of the lipopeptide antibiotics leucinostatins that show extensive biological activities, including antimalarial, antiviral, antibacterial, antifungal, and antitumor activities, as well as phytotoxic. Leucinostatin A contains nine amino acid residues, including the unusual amino acid 4-methyl-L-proline (MePro), 2-amino-6-hydroxy-4-methyl-8-oxodecanoic acid (AHyMeOA), 3-hydroxyleucine (HyLeu), alpha-aminoisobutyric acid (AIB), beta-Ala, a 4-methylhex-2-enoic acid at the N-terminus as well as a N1,N1-dimethylpropane-1,2-diamine (DPD) at the C-terminus. The biosynthesis of leucinostatins is probably initiated with the assembly of 4-methylhex-2-enoic acid by a reducing PKS. Two reducing polyketide synthases, lcsB and lcsC, have been identified in the cluster and it is not clear which is the one that assembles 4-methylhex-2-enoic acid since both contain KS, AT, DH, cMT, ER, KR and ACP domains. The polyketide residue might be transferred to the NRPS lcsA, mediated by two additional enzymes, the acyl-CoA ligase lcsD and the thioesterase lcsE. The linear polyketide carboxylic acid, which is released from PKS, is converted to a CoA thioester by lcsD, and then lcsE hydrolyzes the thiol bond and shuttles the polyketide intermediate to lcsA. The C domain of the first module catalyzed the condensation of 4-methylhex-2-enoic acid and MePro carried by domain A1, followed by successive condensations of nine amino acids to trigger the elongation of the linear peptide. A5 and A6 domains of lcsA are proposed to incorporate leucine, A2 AHyMeOA, and A3 incorporates HyLeu. A4, A7 and A8 incorporate AIB. The AHyMeOA in leucinostatin A activated by the A2 might be produced by the second PKS (lcsB or lcsC) present within the cluster. The MePro is probably produced via leucine cyclization and may originate from a separate pathway, independent of the cluster. Another nonproteinogenic amino acid, beta-Ala, could be produced by an aspartic acid decarboxylase also localized outside of the cluster. Two candidates are VFPBJ_01400 and VFPBJ_10476. The final peptide scaffold may be released by the NAD(P)H-dependent thioester reductase (TE) at the C-terminal region of lcsA. Transamination of the lcsA product by the transaminase lcsP may produce DPD at the C-terminus. Further hydroxylation steps performed alternatively by the cytochrome P450 monooxygenases lcsI, lcsK and lcsN then yield the non-methylated leucinostatins precursor. It is also possible that leucines can be hydroxylated prior to their incorporation into the peptide. Varying extents of methylation then lead to the formation of leucinostatins A and B. This chain is Cytochrome P450 monooxygenase lcsN, found in Purpureocillium lilacinum (Paecilomyces lilacinus).